A 265-amino-acid chain; its full sequence is 4-hydroxy-tetrahydrodipicolinate reductase (265 aa).

Residues 7–12 and aspartate 33 each bind NAD(+); that span reads GASGRM. Arginine 34 lines the NADP(+) pocket. NAD(+)-binding positions include 96–98 and 120–123; these read GTT and AANM. The active-site Proton donor/acceptor is histidine 153. Histidine 154 is a binding site for (S)-2,3,4,5-tetrahydrodipicolinate. Catalysis depends on lysine 157, which acts as the Proton donor. 163 to 164 is a (S)-2,3,4,5-tetrahydrodipicolinate binding site; that stretch reads GT.

The protein belongs to the DapB family.

Its subcellular location is the cytoplasm. The catalysed reaction is (S)-2,3,4,5-tetrahydrodipicolinate + NAD(+) + H2O = (2S,4S)-4-hydroxy-2,3,4,5-tetrahydrodipicolinate + NADH + H(+). It carries out the reaction (S)-2,3,4,5-tetrahydrodipicolinate + NADP(+) + H2O = (2S,4S)-4-hydroxy-2,3,4,5-tetrahydrodipicolinate + NADPH + H(+). It functions in the pathway amino-acid biosynthesis; L-lysine biosynthesis via DAP pathway; (S)-tetrahydrodipicolinate from L-aspartate: step 4/4. Catalyzes the conversion of 4-hydroxy-tetrahydrodipicolinate (HTPA) to tetrahydrodipicolinate. This Burkholderia ambifaria (strain ATCC BAA-244 / DSM 16087 / CCUG 44356 / LMG 19182 / AMMD) (Burkholderia cepacia (strain AMMD)) protein is 4-hydroxy-tetrahydrodipicolinate reductase.